Reading from the N-terminus, the 159-residue chain is Gigasin-1 (159 aa).

Disordered stretches follow at residues 1–33 (GKAT…HDQT) and 80–159 (KESY…KYRR).

In terms of tissue distribution, component of the organic matrix of calcified shell layers.

The sequence is that of Gigasin-1 from Magallana gigas (Pacific oyster).